The primary structure comprises 245 residues: Pre-hexon-linking protein VIII (245 aa).

The propeptide occupies 116 to 167 (LMVGRTEGRMQLAGGLTEGRVQLSGGFHGRPLVRGRSRRPPRWCGAELTGNG).

The protein belongs to the adenoviridae hexon-linking protein family. As to quaternary structure, interacts with the peripentonal hexons as well as the hexons in the facets. Part of a complex composed of the core-capsid bridging protein, the endosome lysis protein VI and the hexon-linking protein VIII; these interactions bridge the virus core to the capsid. Post-translationally, cleaved by the viral protease during virion maturation. May cause the middle segment to be shed from the capsid.

It is found in the virion. The protein resides in the host nucleus. Structural component of the virion that acts as a cement protein on the capsid interior and which glue the peripentonal hexons and group-of-nine hexons together. The protein is Pre-hexon-linking protein VIII of Galliformes (FAdV-1).